The chain runs to 39 residues: U2-ctenitoxin-Co1a (39 aa).

Disulfide bonds are present. Expressed by the venom gland.

The protein resides in the secreted. In terms of biological role, omega-agatoxins are antagonists of voltage-gated calcium channels (Cav). This is U2-ctenitoxin-Co1a from Ctenus ornatus (Brazilian spider).